Reading from the N-terminus, the 560-residue chain is DNA ligase B (560 aa).

The active-site N6-AMP-lysine intermediate is lysine 124.

This sequence belongs to the NAD-dependent DNA ligase family. LigB subfamily.

The enzyme catalyses NAD(+) + (deoxyribonucleotide)n-3'-hydroxyl + 5'-phospho-(deoxyribonucleotide)m = (deoxyribonucleotide)n+m + AMP + beta-nicotinamide D-nucleotide.. Functionally, catalyzes the formation of phosphodiester linkages between 5'-phosphoryl and 3'-hydroxyl groups in double-stranded DNA using NAD as a coenzyme and as the energy source for the reaction. The chain is DNA ligase B from Escherichia coli (strain SMS-3-5 / SECEC).